The following is a 328-amino-acid chain: Sulfate adenylyltransferase subunit 2 (328 aa).

Residues 305-328 form a disordered region; the sequence is ERQGRVIDRDSTGSMERKKAEGYF.

Belongs to the PAPS reductase family. CysD subfamily. Heterodimer composed of CysD, the smaller subunit, and CysN.

It catalyses the reaction sulfate + ATP + H(+) = adenosine 5'-phosphosulfate + diphosphate. Its pathway is sulfur metabolism; hydrogen sulfide biosynthesis; sulfite from sulfate: step 1/3. In terms of biological role, with CysN forms the ATP sulfurylase (ATPS) that catalyzes the adenylation of sulfate producing adenosine 5'-phosphosulfate (APS) and diphosphate, the first enzymatic step in sulfur assimilation pathway. APS synthesis involves the formation of a high-energy phosphoric-sulfuric acid anhydride bond driven by GTP hydrolysis by CysN coupled to ATP hydrolysis by CysD. In Rhodopseudomonas palustris (strain BisB18), this protein is Sulfate adenylyltransferase subunit 2.